Here is a 365-residue protein sequence, read N- to C-terminus: S-adenosylmethionine:tRNA ribosyltransferase-isomerase (365 aa).

It belongs to the QueA family. As to quaternary structure, monomer.

It is found in the cytoplasm. The catalysed reaction is 7-aminomethyl-7-carbaguanosine(34) in tRNA + S-adenosyl-L-methionine = epoxyqueuosine(34) in tRNA + adenine + L-methionine + 2 H(+). It functions in the pathway tRNA modification; tRNA-queuosine biosynthesis. Functionally, transfers and isomerizes the ribose moiety from AdoMet to the 7-aminomethyl group of 7-deazaguanine (preQ1-tRNA) to give epoxyqueuosine (oQ-tRNA). This chain is S-adenosylmethionine:tRNA ribosyltransferase-isomerase, found in Rickettsia africae (strain ESF-5).